A 303-amino-acid polypeptide reads, in one-letter code: UDP-3-O-acyl-N-acetylglucosamine deacetylase (303 aa).

Zn(2+)-binding residues include His78, His237, and Asp241. The Proton donor role is filled by His264.

The protein belongs to the LpxC family. Zn(2+) is required as a cofactor.

It catalyses the reaction a UDP-3-O-[(3R)-3-hydroxyacyl]-N-acetyl-alpha-D-glucosamine + H2O = a UDP-3-O-[(3R)-3-hydroxyacyl]-alpha-D-glucosamine + acetate. It functions in the pathway glycolipid biosynthesis; lipid IV(A) biosynthesis; lipid IV(A) from (3R)-3-hydroxytetradecanoyl-[acyl-carrier-protein] and UDP-N-acetyl-alpha-D-glucosamine: step 2/6. Functionally, catalyzes the hydrolysis of UDP-3-O-myristoyl-N-acetylglucosamine to form UDP-3-O-myristoylglucosamine and acetate, the committed step in lipid A biosynthesis. In Pseudomonas putida (strain ATCC 700007 / DSM 6899 / JCM 31910 / BCRC 17059 / LMG 24140 / F1), this protein is UDP-3-O-acyl-N-acetylglucosamine deacetylase.